Here is a 373-residue protein sequence, read N- to C-terminus: Putative gustatory receptor 10b (373 aa).

The Cytoplasmic segment spans residues 1 to 8 (MRVGKLCR). Residues 9-29 (LALRFWMGLILVLGFSSHYYN) form a helical membrane-spanning segment. Topologically, residues 30 to 82 (PTRRRLVYSRILQTYDWLLMVINLGAFYLYYRYAMTYFLEGMFRRQGFVNQVS) are extracellular. The chain crosses the membrane as a helical span at residues 83–103 (TCNVFQQLLMAVTGTWLHFLF). Residues 104–132 (ERHVCQTYNELSRILKHDLKLKEHSRFYC) lie on the Cytoplasmic side of the membrane. Residues 133–153 (LAFLAKVYNFFHNFNFALSAI) form a helical membrane-spanning segment. Topologically, residues 154 to 170 (MHWGLRPFNVWDLLANL) are extracellular. The helical transmembrane segment at 171–191 (YFVYNSLARDAILVAYVLLLL) threads the bilayer. Topologically, residues 192-230 (NLSEALRLNGQQEHDTYSDLMKQLRRRERLLRIGRRVHR) are cytoplasmic. Residues 231–251 (MFAWLVAIALIYLVFFNTATI) form a helical membrane-spanning segment. Topologically, residues 252 to 273 (YLGYTMFIQKHDALGLRGRGLK) are extracellular. A helical transmembrane segment spans residues 274–294 (MLLTVVSFLVILWDVVLLQVI). The Cytoplasmic portion of the chain corresponds to 295 to 350 (CEKLLAEENKICDCPEDVASSRTTYRQWEMSALRRAITRSSPENNVLGMFRMDMRC). A helical transmembrane segment spans residues 351 to 371 (AFALISCSLSYGIIIIQIGYI). The Extracellular portion of the chain corresponds to 372 to 373 (PG).

Belongs to the insect chemoreceptor superfamily. Gustatory receptor (GR) family. Gr10a subfamily.

The protein resides in the cell membrane. Its function is as follows. Probable gustatory receptor which mediates acceptance or avoidance behavior, depending on its substrates. This chain is Putative gustatory receptor 10b (Gr10b), found in Drosophila melanogaster (Fruit fly).